Reading from the N-terminus, the 261-residue chain is Small ribosomal subunit protein uS2 (261 aa).

The protein belongs to the universal ribosomal protein uS2 family.

The chain is Small ribosomal subunit protein uS2 from Thermodesulfovibrio yellowstonii (strain ATCC 51303 / DSM 11347 / YP87).